A 208-amino-acid polypeptide reads, in one-letter code: Uracil phosphoribosyltransferase (208 aa).

5-phospho-alpha-D-ribose 1-diphosphate-binding positions include Arg-78, Arg-103, and 130-138 (DPMLATGGS). Residues Ile-193 and 198 to 200 (GDA) contribute to the uracil site. Asp-199 serves as a coordination point for 5-phospho-alpha-D-ribose 1-diphosphate.

Belongs to the UPRTase family. The cofactor is Mg(2+).

The catalysed reaction is UMP + diphosphate = 5-phospho-alpha-D-ribose 1-diphosphate + uracil. It participates in pyrimidine metabolism; UMP biosynthesis via salvage pathway; UMP from uracil: step 1/1. Its activity is regulated as follows. Allosterically activated by GTP. Its function is as follows. Catalyzes the conversion of uracil and 5-phospho-alpha-D-ribose 1-diphosphate (PRPP) to UMP and diphosphate. The protein is Uracil phosphoribosyltransferase of Colwellia psychrerythraea (strain 34H / ATCC BAA-681) (Vibrio psychroerythus).